We begin with the raw amino-acid sequence, 660 residues long: Kinesin-like protein KIF2A (660 aa).

Residues 1 to 140 (MVTSLNEDNE…QQELREKRAQ (140 aa)) are disordered. The interval 1 to 171 (MVTSLNEDNE…LDYRPLTTAD (171 aa)) is globular. Phosphoserine is present on serine 48. Residues threonine 51 and threonine 70 each carry the phosphothreonine modification. The residue at position 73 (serine 73) is a Phosphoserine. At lysine 75 the chain carries N6-acetyllysine. Polar residues predominate over residues 96-106 (LPEQSSSAQQN). The span at 113-140 (CVKEVEKLQEKREKRRLQQQELREKRAQ) shows a compositional bias: basic and acidic residues. The Kinesin motor domain occupies 177–507 (RICVCVRKRP…LRYANRVKEL (331 aa)). ATP is bound at residue 267-274 (GQTGSGKT). A coiled-coil region spans residues 614–653 (ATQLEAILEQKIDILTELRDKVKSFRAALQEEEQASKQIN).

Belongs to the TRAFAC class myosin-kinesin ATPase superfamily. Kinesin family. MCAK/KIF2 subfamily. As to quaternary structure, interacts with AURKA and PLK1. Interacts with PSRC1. Interacts with MCRS1; the interaction enhances recruitment of KIF2A to the minus ends of spindle microtubules which promotes chromosome alignment.

Its subcellular location is the cytoplasm. The protein localises to the cytoskeleton. It localises to the microtubule organizing center. The protein resides in the centrosome. It is found in the spindle pole. Its subcellular location is the spindle. Plus end-directed microtubule-dependent motor required for normal brain development. May regulate microtubule dynamics during axonal growth. Required for normal progression through mitosis. Required for normal congress of chromosomes at the metaphase plate. Required for normal spindle dynamics during mitosis. Promotes spindle turnover. Implicated in formation of bipolar mitotic spindles. Has microtubule depolymerization activity. The sequence is that of Kinesin-like protein KIF2A (KIF2A) from Bos taurus (Bovine).